The following is a 397-amino-acid chain: Acetate kinase (397 aa).

Residue Asn8 participates in Mg(2+) binding. Lys15 lines the ATP pocket. Residue Arg92 coordinates substrate. Asp149 (proton donor/acceptor) is an active-site residue. ATP-binding positions include 209 to 213, 283 to 285, and 331 to 335; these read HLGNG, DFR, and GVGEN. Glu385 is a binding site for Mg(2+).

Belongs to the acetokinase family. In terms of assembly, homodimer. Mg(2+) is required as a cofactor. Mn(2+) serves as cofactor.

The protein localises to the cytoplasm. The enzyme catalyses acetate + ATP = acetyl phosphate + ADP. It functions in the pathway metabolic intermediate biosynthesis; acetyl-CoA biosynthesis; acetyl-CoA from acetate: step 1/2. Its function is as follows. Catalyzes the formation of acetyl phosphate from acetate and ATP. Can also catalyze the reverse reaction. The chain is Acetate kinase from Corynebacterium glutamicum (strain R).